Here is a 457-residue protein sequence, read N- to C-terminus: PDZ and LIM domain protein 7 (457 aa).

One can recognise a PDZ domain in the interval 1 to 85 (MDSFKVVLEG…RLSLGLSRAQ (85 aa)). Residue Ser78 is modified to Phosphoserine. Disordered stretches follow at residues 81-132 (LSRA…LSQN) and 186-226 (FMKK…PWAV). At Thr96 the chain carries Phosphothreonine. Arg103 is subject to Asymmetric dimethylarginine. Phosphoserine is present on Ser111. The residue at position 247 (Ser247) is a Phosphoserine. LIM zinc-binding domains lie at 280-338 (PVCH…VRYA), 339-398 (PSCA…MFGT), and 399-457 (KCRG…FSHV).

In terms of assembly, binds via its LIM zinc-binding 3 domain (LIM 3) domain to endocytic codes of INSR, but not with those of IGF1R, LDLR, TFRC, or EGFR. Interacts with various PKC isoforms through the LIM zinc-binding domains. Binds to RET in a phosphorylation-independent manner via its LIM zinc-binding 2 domain (LIM 2). Probably part of a complex with SHC and the RET dimer. Interacts with TPM2, TBX4 and TBX5. Interacts (via LIM domains) with SIPA1L1. Expressed in kidney, heart, brain, lung, and skeletal muscle. Overexpression results in the synthesis of an unidentified soluble factor which acts on cells in the osteoblast lineage causing them to differentiate and secrete BMP-2.

It localises to the cytoplasm. It is found in the cytoskeleton. Functionally, may function as a scaffold on which the coordinated assembly of proteins can occur. May play a role as an adapter that, via its PDZ domain, localizes LIM-binding proteins to actin filaments of both skeletal muscle and nonmuscle tissues. Involved in both of the two fundamental mechanisms of bone formation, direct bone formation (e.g. embryonic flat bones mandible and cranium), and endochondral bone formation (e.g. embryonic long bone development). Plays a role during fracture repair. Involved in BMP6 signaling pathway. This chain is PDZ and LIM domain protein 7 (Pdlim7), found in Rattus norvegicus (Rat).